The chain runs to 350 residues: Protein RecA (350 aa).

G65–T72 is a binding site for ATP.

It belongs to the RecA family.

Its subcellular location is the cytoplasm. In terms of biological role, can catalyze the hydrolysis of ATP in the presence of single-stranded DNA, the ATP-dependent uptake of single-stranded DNA by duplex DNA, and the ATP-dependent hybridization of homologous single-stranded DNAs. It interacts with LexA causing its activation and leading to its autocatalytic cleavage. This is Protein RecA from Clostridium tetani (strain Massachusetts / E88).